The following is a 660-amino-acid chain: Bifunctional polymyxin resistance protein ArnA (660 aa).

The formyltransferase ArnAFT stretch occupies residues 1-304 (MKAVIFAYHD…TLGLVAGACL (304 aa)). The Proton donor; for formyltransferase activity role is filled by histidine 104. Residues arginine 114 and 136 to 140 (VKRAD) each bind (6R)-10-formyltetrahydrofolate. The tract at residues 314-660 (RRIRVLILGV…RSVDIAERAS (347 aa)) is dehydrogenase ArnADH. NAD(+)-binding positions include aspartate 347 and 368–369 (DI). Residues alanine 393, tyrosine 398, and 432–433 (TS) each bind UDP-alpha-D-glucuronate. The Proton acceptor; for decarboxylase activity role is filled by glutamate 434. UDP-alpha-D-glucuronate is bound by residues arginine 460, asparagine 492, 526–535 (KLIDGGQQKR), and tyrosine 613. The Proton donor; for decarboxylase activity role is filled by arginine 619.

This sequence in the N-terminal section; belongs to the Fmt family. UDP-L-Ara4N formyltransferase subfamily. In the C-terminal section; belongs to the NAD(P)-dependent epimerase/dehydratase family. UDP-glucuronic acid decarboxylase subfamily. As to quaternary structure, homohexamer, formed by a dimer of trimers.

It carries out the reaction UDP-alpha-D-glucuronate + NAD(+) = UDP-beta-L-threo-pentopyranos-4-ulose + CO2 + NADH. The catalysed reaction is UDP-4-amino-4-deoxy-beta-L-arabinose + (6R)-10-formyltetrahydrofolate = UDP-4-deoxy-4-formamido-beta-L-arabinose + (6S)-5,6,7,8-tetrahydrofolate + H(+). It functions in the pathway nucleotide-sugar biosynthesis; UDP-4-deoxy-4-formamido-beta-L-arabinose biosynthesis; UDP-4-deoxy-4-formamido-beta-L-arabinose from UDP-alpha-D-glucuronate: step 1/3. It participates in nucleotide-sugar biosynthesis; UDP-4-deoxy-4-formamido-beta-L-arabinose biosynthesis; UDP-4-deoxy-4-formamido-beta-L-arabinose from UDP-alpha-D-glucuronate: step 3/3. Its pathway is bacterial outer membrane biogenesis; lipopolysaccharide biosynthesis. Functionally, bifunctional enzyme that catalyzes the oxidative decarboxylation of UDP-glucuronic acid (UDP-GlcUA) to UDP-4-keto-arabinose (UDP-Ara4O) and the addition of a formyl group to UDP-4-amino-4-deoxy-L-arabinose (UDP-L-Ara4N) to form UDP-L-4-formamido-arabinose (UDP-L-Ara4FN). The modified arabinose is attached to lipid A and is required for resistance to polymyxin and cationic antimicrobial peptides. This chain is Bifunctional polymyxin resistance protein ArnA, found in Salmonella paratyphi A (strain ATCC 9150 / SARB42).